A 379-amino-acid polypeptide reads, in one-letter code: Dual-specificity RNA methyltransferase RlmN (379 aa).

The active-site Proton acceptor is the Glu-95. The Radical SAM core domain occupies 101–345 (EETRGTLCVS…TTVRKTRGDD (245 aa)). A disulfide bond links Cys-108 and Cys-350. [4Fe-4S] cluster-binding residues include Cys-115, Cys-119, and Cys-122. S-adenosyl-L-methionine is bound by residues 176-177 (GE), Ser-208, 230-232 (SLH), and Asn-307. The active-site S-methylcysteine intermediate is the Cys-350.

This sequence belongs to the radical SAM superfamily. RlmN family. Requires [4Fe-4S] cluster as cofactor.

Its subcellular location is the cytoplasm. The enzyme catalyses adenosine(2503) in 23S rRNA + 2 reduced [2Fe-2S]-[ferredoxin] + 2 S-adenosyl-L-methionine = 2-methyladenosine(2503) in 23S rRNA + 5'-deoxyadenosine + L-methionine + 2 oxidized [2Fe-2S]-[ferredoxin] + S-adenosyl-L-homocysteine. The catalysed reaction is adenosine(37) in tRNA + 2 reduced [2Fe-2S]-[ferredoxin] + 2 S-adenosyl-L-methionine = 2-methyladenosine(37) in tRNA + 5'-deoxyadenosine + L-methionine + 2 oxidized [2Fe-2S]-[ferredoxin] + S-adenosyl-L-homocysteine. In terms of biological role, specifically methylates position 2 of adenine 2503 in 23S rRNA and position 2 of adenine 37 in tRNAs. m2A2503 modification seems to play a crucial role in the proofreading step occurring at the peptidyl transferase center and thus would serve to optimize ribosomal fidelity. The sequence is that of Dual-specificity RNA methyltransferase RlmN from Burkholderia lata (strain ATCC 17760 / DSM 23089 / LMG 22485 / NCIMB 9086 / R18194 / 383).